We begin with the raw amino-acid sequence, 324 residues long: GTP cyclohydrolase 1 (324 aa).

Disordered stretches follow at residues 33–59 and 79–119; these read GRNN…NQAE and VPLA…TPGH. Over residues 40–49 the composition is skewed to low complexity; it reads STSSTSGTSS. Polar residues-rich tracts occupy residues 50–59 and 93–117; these read LADRQQNQAE and TNGS…STTP. Residues Cys-214, His-217, and Cys-285 each coordinate Zn(2+).

It belongs to the GTP cyclohydrolase I family. As to quaternary structure, toroid-shaped homodecamer, composed of two pentamers of five dimers. In terms of tissue distribution, isoform B is expressed almost exclusively in adult heads.

It catalyses the reaction GTP + H2O = 7,8-dihydroneopterin 3'-triphosphate + formate + H(+). Its pathway is cofactor biosynthesis; 7,8-dihydroneopterin triphosphate biosynthesis; 7,8-dihydroneopterin triphosphate from GTP: step 1/1. Its function is as follows. Isoform B is required for eye pigment production, Isoform C may be required for normal embryonic development and segment pattern formation. The sequence is that of GTP cyclohydrolase 1 (Pu) from Drosophila melanogaster (Fruit fly).